The primary structure comprises 177 residues: Large ribosomal subunit protein uL6 (177 aa).

Belongs to the universal ribosomal protein uL6 family. Part of the 50S ribosomal subunit.

This protein binds to the 23S rRNA, and is important in its secondary structure. It is located near the subunit interface in the base of the L7/L12 stalk, and near the tRNA binding site of the peptidyltransferase center. The polypeptide is Large ribosomal subunit protein uL6 (Edwardsiella ictaluri (strain 93-146)).